Reading from the N-terminus, the 210-residue chain is Two-component response regulator ORR7 (210 aa).

The interval 53–92 (VVPLHDNASAEDDDDDEEDDDEDDDDDDDEDDEEEAAPPY) is disordered. The span at 61 to 88 (SAEDDDDDEEDDDEDDDDDDDEDDEEEA) shows a compositional bias: acidic residues. Residues 92–205 (YVMAVDDSSV…VRPADISRIT (114 aa)) form the Response regulatory domain. 4-aspartylphosphate is present on Asp-142.

Belongs to the ARR family. Type-A subfamily. In terms of processing, two-component system major event consists of a His-to-Asp phosphorelay between a sensor histidine kinase (HK) and a response regulator (RR). In plants, the His-to-Asp phosphorelay involves an additional intermediate named Histidine-containing phosphotransfer protein (HPt). This multistep phosphorelay consists of a His-Asp-His-Asp sequential transfer of a phosphate group between first a His and an Asp of the HK protein, followed by the transfer to a conserved His of the HPt protein and finally the transfer to an Asp in the receiver domain of the RR protein.

Functionally, functions as a response regulator involved in His-to-Asp phosphorelay signal transduction system. Phosphorylation of the Asp residue in the receiver domain activates the ability of the protein to promote the transcription of target genes. Type-A response regulators seem to act as negative regulators of the cytokinin signaling. This Oryza sativa subsp. japonica (Rice) protein is Two-component response regulator ORR7.